Reading from the N-terminus, the 394-residue chain is NAD(P)H-quinone oxidoreductase subunit H (394 aa).

Belongs to the complex I 49 kDa subunit family. As to quaternary structure, NDH-1 can be composed of about 15 different subunits; different subcomplexes with different compositions have been identified which probably have different functions.

The protein resides in the cellular thylakoid membrane. It carries out the reaction a plastoquinone + NADH + (n+1) H(+)(in) = a plastoquinol + NAD(+) + n H(+)(out). It catalyses the reaction a plastoquinone + NADPH + (n+1) H(+)(in) = a plastoquinol + NADP(+) + n H(+)(out). Its function is as follows. NDH-1 shuttles electrons from an unknown electron donor, via FMN and iron-sulfur (Fe-S) centers, to quinones in the respiratory and/or the photosynthetic chain. The immediate electron acceptor for the enzyme in this species is believed to be plastoquinone. Couples the redox reaction to proton translocation, and thus conserves the redox energy in a proton gradient. Cyanobacterial NDH-1 also plays a role in inorganic carbon-concentration. The chain is NAD(P)H-quinone oxidoreductase subunit H from Synechococcus sp. (strain WH7803).